The primary structure comprises 315 residues: Transmembrane protein 231 (315 aa).

Residues 23-43 (AALFLLLTTALTYIPPLLVAF) traverse the membrane as a helical segment. Residues Asn194, Asn199, and Asn221 are each glycosylated (N-linked (GlcNAc...) asparagine). Residues 262–282 (FWEMIKFAWIQYVSILLIFLW) form a helical membrane-spanning segment.

This sequence belongs to the TMEM231 family. As to quaternary structure, part of the tectonic-like complex (also named B9 complex). Interacts with TMEM107.

The protein localises to the cell projection. It is found in the cilium membrane. Its function is as follows. Transmembrane component of the tectonic-like complex, a complex localized at the transition zone of primary cilia and acting as a barrier that prevents diffusion of transmembrane proteins between the cilia and plasma membranes. Required for ciliogenesis and sonic hedgehog/SHH signaling. This Mus musculus (Mouse) protein is Transmembrane protein 231 (Tmem231).